We begin with the raw amino-acid sequence, 136 residues long: Small ribosomal subunit protein uS8c (136 aa).

Belongs to the universal ribosomal protein uS8 family. In terms of assembly, part of the 30S ribosomal subunit.

It localises to the plastid. The protein resides in the chloroplast. Functionally, one of the primary rRNA binding proteins, it binds directly to 16S rRNA central domain where it helps coordinate assembly of the platform of the 30S subunit. This is Small ribosomal subunit protein uS8c (rps8) from Saccharum officinarum (Sugarcane).